The primary structure comprises 104 residues: Large ribosomal subunit protein bL21 (104 aa).

Belongs to the bacterial ribosomal protein bL21 family. In terms of assembly, part of the 50S ribosomal subunit. Contacts protein L20.

Functionally, this protein binds to 23S rRNA in the presence of protein L20. This is Large ribosomal subunit protein bL21 from Symbiobacterium thermophilum (strain DSM 24528 / JCM 14929 / IAM 14863 / T).